A 199-amino-acid chain; its full sequence is Shikimate kinase (199 aa).

14 to 19 provides a ligand contact to ATP; that stretch reads GSGKST. Residue serine 18 participates in Mg(2+) binding. 3 residues coordinate substrate: aspartate 36, arginine 60, and glycine 82. An ATP-binding site is contributed by arginine 120. Position 147 (arginine 147) interacts with substrate. The disordered stretch occupies residues 179 to 199; that stretch reads YVRRAEKNQNSHSQTKKQSRK.

The protein belongs to the shikimate kinase family. In terms of assembly, monomer. It depends on Mg(2+) as a cofactor.

The protein resides in the cytoplasm. The catalysed reaction is shikimate + ATP = 3-phosphoshikimate + ADP + H(+). It participates in metabolic intermediate biosynthesis; chorismate biosynthesis; chorismate from D-erythrose 4-phosphate and phosphoenolpyruvate: step 5/7. Functionally, catalyzes the specific phosphorylation of the 3-hydroxyl group of shikimic acid using ATP as a cosubstrate. The sequence is that of Shikimate kinase from Chlorobium phaeobacteroides (strain BS1).